Here is a 439-residue protein sequence, read N- to C-terminus: Probable cinnamyl alcohol dehydrogenase 8C (439 aa).

Cys120 contributes to the Zn(2+) binding site. Thr122 serves as a coordination point for NADP(+). Zn(2+)-binding residues include His142, Glu143, Cys173, Cys176, Cys179, Cys187, and Cys239. NADP(+) is bound by residues Thr243, 264–269 (GLGGLG), 287–292 (STSPGK), Thr327, Gly351, and 374–376 (NCV).

The protein belongs to the zinc-containing alcohol dehydrogenase family. As to quaternary structure, homodimer. It depends on Zn(2+) as a cofactor.

It carries out the reaction (E)-cinnamyl alcohol + NADP(+) = (E)-cinnamaldehyde + NADPH + H(+). The enzyme catalyses (E)-coniferol + NADP(+) = (E)-coniferaldehyde + NADPH + H(+). The catalysed reaction is (E)-sinapyl alcohol + NADP(+) = (E)-sinapaldehyde + NADPH + H(+). It catalyses the reaction (E)-4-coumaroyl alcohol + NADP(+) = (E)-4-coumaraldehyde + NADPH + H(+). It carries out the reaction (E)-caffeyl alcohol + NADP(+) = (E)-caffeyl aldehyde + NADPH + H(+). It functions in the pathway aromatic compound metabolism; phenylpropanoid biosynthesis. Involved in lignin biosynthesis. Catalyzes the final step specific for the production of lignin monomers. Catalyzes the NADPH-dependent reduction of coniferaldehyde, 5-hydroxyconiferaldehyde, sinapaldehyde, 4-coumaraldehyde and caffeyl aldehyde to their respective alcohols. This Oryza sativa subsp. japonica (Rice) protein is Probable cinnamyl alcohol dehydrogenase 8C.